Consider the following 147-residue polypeptide: Hemoglobin subunit beta (147 aa).

At V2 the chain carries N-acetylvaline. A Globin domain is found at 3–147 (HLTAEEKSAV…VANALAHKYH (145 aa)). T13 carries the phosphothreonine modification. Position 45 is a phosphoserine (S45). N6-acetyllysine is present on K60. Position 64 (H64) interacts with heme b. K83 is subject to N6-acetyllysine. A heme b-binding site is contributed by H93. An S-nitrosocysteine modification is found at C94. K145 bears the N6-acetyllysine mark.

It belongs to the globin family. Heterotetramer of two alpha chains and two beta chains. In terms of tissue distribution, red blood cells.

Its function is as follows. Involved in oxygen transport from the lung to the various peripheral tissues. This is Hemoglobin subunit beta (HBB) from Sapajus apella (Brown-capped capuchin).